Reading from the N-terminus, the 377-residue chain is Probable purine permease 22 (377 aa).

10 consecutive transmembrane segments (helical) span residues 39-59, 71-91, 107-127, 128-148, 166-186, 202-222, 238-258, 283-303, 309-329, and 338-358; these read WLRV…ATVL, TYVV…FRFF, SPSF…VSAY, AYLS…LILA, FTPL…LLVV, VIGF…LSLI, VLDL…IGLF, TLAS…GLIF, FSNS…VIVF, and IFSI…HYLD.

Belongs to the purine permeases (TC 2.A.7.14) family.

The protein resides in the membrane. This Arabidopsis thaliana (Mouse-ear cress) protein is Probable purine permease 22 (PUP22).